A 347-amino-acid chain; its full sequence is Holliday junction branch migration complex subunit RuvB (347 aa).

The large ATPase domain (RuvB-L) stretch occupies residues 1-185; the sequence is MSDDPTTPEL…FGFTAHLEFY (185 aa). ATP is bound by residues Leu-24, Arg-25, Gly-66, Lys-69, Thr-70, Thr-71, 132–134, Arg-175, Tyr-185, and Arg-222; that span reads EDF. Thr-70 lines the Mg(2+) pocket. The interval 186–255 is small ATPAse domain (RuvB-S); that stretch reads DEGELAQVLA…AVHAALELYD (70 aa). A head domain (RuvB-H) region spans residues 258–347; it reads ELGLDRLDRA…SQPPSLMDDL (90 aa). Positions 313 and 318 each coordinate DNA.

This sequence belongs to the RuvB family. As to quaternary structure, homohexamer. Forms an RuvA(8)-RuvB(12)-Holliday junction (HJ) complex. HJ DNA is sandwiched between 2 RuvA tetramers; dsDNA enters through RuvA and exits via RuvB. An RuvB hexamer assembles on each DNA strand where it exits the tetramer. Each RuvB hexamer is contacted by two RuvA subunits (via domain III) on 2 adjacent RuvB subunits; this complex drives branch migration. In the full resolvosome a probable DNA-RuvA(4)-RuvB(12)-RuvC(2) complex forms which resolves the HJ.

It localises to the cytoplasm. The catalysed reaction is ATP + H2O = ADP + phosphate + H(+). In terms of biological role, the RuvA-RuvB-RuvC complex processes Holliday junction (HJ) DNA during genetic recombination and DNA repair, while the RuvA-RuvB complex plays an important role in the rescue of blocked DNA replication forks via replication fork reversal (RFR). RuvA specifically binds to HJ cruciform DNA, conferring on it an open structure. The RuvB hexamer acts as an ATP-dependent pump, pulling dsDNA into and through the RuvAB complex. RuvB forms 2 homohexamers on either side of HJ DNA bound by 1 or 2 RuvA tetramers; 4 subunits per hexamer contact DNA at a time. Coordinated motions by a converter formed by DNA-disengaged RuvB subunits stimulates ATP hydrolysis and nucleotide exchange. Immobilization of the converter enables RuvB to convert the ATP-contained energy into a lever motion, pulling 2 nucleotides of DNA out of the RuvA tetramer per ATP hydrolyzed, thus driving DNA branch migration. The RuvB motors rotate together with the DNA substrate, which together with the progressing nucleotide cycle form the mechanistic basis for DNA recombination by continuous HJ branch migration. Branch migration allows RuvC to scan DNA until it finds its consensus sequence, where it cleaves and resolves cruciform DNA. This Leifsonia xyli subsp. xyli (strain CTCB07) protein is Holliday junction branch migration complex subunit RuvB.